The sequence spans 381 residues: Alkanesulfonate monooxygenase (381 aa).

This sequence belongs to the SsuD family. Homotetramer.

It catalyses the reaction an alkanesulfonate + FMNH2 + O2 = an aldehyde + FMN + sulfite + H2O + 2 H(+). In terms of biological role, catalyzes the desulfonation of aliphatic sulfonates. The polypeptide is Alkanesulfonate monooxygenase (Escherichia coli O81 (strain ED1a)).